Here is a 376-residue protein sequence, read N- to C-terminus: Alcohol dehydrogenase class-3 (376 aa).

Zn(2+)-binding residues include C40, H62, C92, C95, C98, C106, and C170.

This sequence belongs to the zinc-containing alcohol dehydrogenase family. Class-III subfamily. As to quaternary structure, homodimer. Requires Zn(2+) as cofactor.

The protein resides in the cytoplasm. The enzyme catalyses a primary alcohol + NAD(+) = an aldehyde + NADH + H(+). The catalysed reaction is a secondary alcohol + NAD(+) = a ketone + NADH + H(+). It carries out the reaction S-(hydroxymethyl)glutathione + NADP(+) = S-formylglutathione + NADPH + H(+). It catalyses the reaction S-(hydroxymethyl)glutathione + NAD(+) = S-formylglutathione + NADH + H(+). Functionally, oxidizes long-chain aliphatic alcohols, long-chain hydroxylated fatty acids and S-hydroxymethylglutathione (hmGSH) in increasing order of preference. Shows little or no activity with short-chain aliphatic alcohols. The protein is Alcohol dehydrogenase class-3 (adhI) of Cereibacter sphaeroides (strain ATCC 17023 / DSM 158 / JCM 6121 / CCUG 31486 / LMG 2827 / NBRC 12203 / NCIMB 8253 / ATH 2.4.1.) (Rhodobacter sphaeroides).